Consider the following 362-residue polypeptide: 3-dehydroquinate synthase (362 aa).

Residues D71–K76, G105–D109, T129–T130, K142, K151, and C169–T172 each bind NAD(+). Positions 184, 247, and 264 each coordinate Zn(2+).

Belongs to the sugar phosphate cyclases superfamily. Dehydroquinate synthase family. Co(2+) is required as a cofactor. Zn(2+) serves as cofactor. The cofactor is NAD(+).

Its subcellular location is the cytoplasm. It catalyses the reaction 7-phospho-2-dehydro-3-deoxy-D-arabino-heptonate = 3-dehydroquinate + phosphate. Its pathway is metabolic intermediate biosynthesis; chorismate biosynthesis; chorismate from D-erythrose 4-phosphate and phosphoenolpyruvate: step 2/7. Catalyzes the conversion of 3-deoxy-D-arabino-heptulosonate 7-phosphate (DAHP) to dehydroquinate (DHQ). The chain is 3-dehydroquinate synthase from Escherichia coli O81 (strain ED1a).